Here is a 681-residue protein sequence, read N- to C-terminus: Potassium-transporting ATPase ATP-binding subunit (681 aa).

4 helical membrane passes run 30–50, 59–79, 216–236, and 255–275; these read LLVYVGAILATSLYFLGFFGI, LAIALILWFTVLFANFAEAIA, ILLVTLSIIFLAVSATLLPFT, and IALLVCLAPTTIGALLSSIGI. D306 (4-aspartylphosphate intermediate) is an active-site residue. ATP is bound by residues D343, E347, 376 to 383, and K394; that span reads FTATTRMS. D517 and D521 together coordinate Mg(2+). 3 helical membrane-spanning segments follow: residues 587–607, 615–635, and 661–681; these read FAIIPVLFYGIFPQLEALNLM, AILSAIIYNALIIIFLIPLSL, and LVAPFIAIKLIDMLLTVLGIV.

This sequence belongs to the cation transport ATPase (P-type) (TC 3.A.3) family. Type IA subfamily. In terms of assembly, the system is composed of three essential subunits: KdpA, KdpB and KdpC.

Its subcellular location is the cell membrane. The catalysed reaction is K(+)(out) + ATP + H2O = K(+)(in) + ADP + phosphate + H(+). In terms of biological role, part of the high-affinity ATP-driven potassium transport (or Kdp) system, which catalyzes the hydrolysis of ATP coupled with the electrogenic transport of potassium into the cytoplasm. This subunit is responsible for energy coupling to the transport system and for the release of the potassium ions to the cytoplasm. This Listeria welshimeri serovar 6b (strain ATCC 35897 / DSM 20650 / CCUG 15529 / CIP 8149 / NCTC 11857 / SLCC 5334 / V8) protein is Potassium-transporting ATPase ATP-binding subunit.